The sequence spans 119 residues: Large ribosomal subunit protein bL20 (119 aa).

The protein belongs to the bacterial ribosomal protein bL20 family.

Binds directly to 23S ribosomal RNA and is necessary for the in vitro assembly process of the 50S ribosomal subunit. It is not involved in the protein synthesizing functions of that subunit. The sequence is that of Large ribosomal subunit protein bL20 from Latilactobacillus sakei subsp. sakei (strain 23K) (Lactobacillus sakei subsp. sakei).